Here is a 277-residue protein sequence, read N- to C-terminus: 4-hydroxy-3-methylbut-2-enyl diphosphate reductase (277 aa).

Residue Cys-12 coordinates [4Fe-4S] cluster. His-36 and His-70 together coordinate (2E)-4-hydroxy-3-methylbut-2-enyl diphosphate. Dimethylallyl diphosphate is bound by residues His-36 and His-70. Isopentenyl diphosphate is bound by residues His-36 and His-70. Position 92 (Cys-92) interacts with [4Fe-4S] cluster. His-120 contacts (2E)-4-hydroxy-3-methylbut-2-enyl diphosphate. His-120 lines the dimethylallyl diphosphate pocket. Isopentenyl diphosphate is bound at residue His-120. Glu-122 acts as the Proton donor in catalysis. A (2E)-4-hydroxy-3-methylbut-2-enyl diphosphate-binding site is contributed by Thr-158. Position 186 (Cys-186) interacts with [4Fe-4S] cluster. Ser-214, Asn-216, and Ser-258 together coordinate (2E)-4-hydroxy-3-methylbut-2-enyl diphosphate. Residues Ser-214, Asn-216, and Ser-258 each contribute to the dimethylallyl diphosphate site. Residues Ser-214, Asn-216, and Ser-258 each contribute to the isopentenyl diphosphate site.

It belongs to the IspH family. [4Fe-4S] cluster is required as a cofactor.

The catalysed reaction is isopentenyl diphosphate + 2 oxidized [2Fe-2S]-[ferredoxin] + H2O = (2E)-4-hydroxy-3-methylbut-2-enyl diphosphate + 2 reduced [2Fe-2S]-[ferredoxin] + 2 H(+). The enzyme catalyses dimethylallyl diphosphate + 2 oxidized [2Fe-2S]-[ferredoxin] + H2O = (2E)-4-hydroxy-3-methylbut-2-enyl diphosphate + 2 reduced [2Fe-2S]-[ferredoxin] + 2 H(+). The protein operates within isoprenoid biosynthesis; dimethylallyl diphosphate biosynthesis; dimethylallyl diphosphate from (2E)-4-hydroxy-3-methylbutenyl diphosphate: step 1/1. It functions in the pathway isoprenoid biosynthesis; isopentenyl diphosphate biosynthesis via DXP pathway; isopentenyl diphosphate from 1-deoxy-D-xylulose 5-phosphate: step 6/6. In terms of biological role, catalyzes the conversion of 1-hydroxy-2-methyl-2-(E)-butenyl 4-diphosphate (HMBPP) into a mixture of isopentenyl diphosphate (IPP) and dimethylallyl diphosphate (DMAPP). Acts in the terminal step of the DOXP/MEP pathway for isoprenoid precursor biosynthesis. The sequence is that of 4-hydroxy-3-methylbut-2-enyl diphosphate reductase from Campylobacter jejuni subsp. jejuni serotype O:23/36 (strain 81-176).